The chain runs to 498 residues: DEAD-box ATP-dependent RNA helicase 6 (498 aa).

Positions 1 to 109 (MDPRARYPPG…WKAQLKLPPQ (109 aa)) are disordered. Residues 33–49 (QHQHQHQQPPHPHHHQY) show a composition bias toward basic residues. Composition is skewed to low complexity over residues 50-61 (VQRQPQPQQTPH) and 75-86 (AAEAAGASEQKA). The short motif at 124–152 (NEFEDYFLKRELLMGIYEKGFERPSPIQE) is the Q motif element. One can recognise a Helicase ATP-binding domain in the interval 155–325 (IPIALTGSDI…DKYLPKPYVI (171 aa)). 168-175 (AKNGTGKT) serves as a coordination point for ATP. The DEAD box signature appears at 273-276 (DEAD). The 161-residue stretch at 335–495 (GITQFYAFVE…PIPPQIDRAI (161 aa)) folds into the Helicase C-terminal domain.

It belongs to the DEAD box helicase family. DDX6/DHH1 subfamily.

It is found in the cytoplasm. The protein localises to the P-body. It catalyses the reaction ATP + H2O = ADP + phosphate + H(+). ATP-dependent RNA helicase involved in mRNA turnover, and more specifically in mRNA decapping. The polypeptide is DEAD-box ATP-dependent RNA helicase 6 (Oryza sativa subsp. japonica (Rice)).